Consider the following 352-residue polypeptide: Tropomodulin-3 (352 aa).

Serine 25 carries the post-translational modification Phosphoserine.

This sequence belongs to the tropomodulin family. As to quaternary structure, binds to the N-terminus of tropomyosin and to actin. Interacts with FLII. In terms of tissue distribution, ubiquitous.

It is found in the cytoplasm. Its subcellular location is the cytoskeleton. Blocks the elongation and depolymerization of the actin filaments at the pointed end. The Tmod/TM complex contributes to the formation of the short actin protofilament, which in turn defines the geometry of the membrane skeleton. This chain is Tropomodulin-3 (TMOD3), found in Homo sapiens (Human).